Reading from the N-terminus, the 60-residue chain is UPF0434 protein YcaR (60 aa).

This sequence belongs to the UPF0434 family.

This chain is UPF0434 protein YcaR, found in Salmonella agona (strain SL483).